A 73-amino-acid chain; its full sequence is Serine rich endogenous peptide 14 (73 aa).

An N-terminal signal peptide occupies residues 1 to 31; that stretch reads MAAKTSNLVALLLSLFLLLLSISSQVGLGEA. Residues 44-73 form a disordered region; that stretch reads VSHPSPPPPHRSMAPPIFVPPSTSHKGQGP. The short motif at 59 to 73 is the SCOOP motif element; it reads PIFVPPSTSHKGQGP. The segment covering 64–73 has biased composition (polar residues); that stretch reads PSTSHKGQGP. Positions 65 to 67 match the SxS motif essential for MIK2 binding motif; the sequence is STS.

It belongs to the serine rich endogenous peptide (SCOOP) phytocytokine family. In terms of assembly, interacts with MIK2 (via extracellular leucine-rich repeat domain); this interaction triggers the formation of complex between MIK2 and the BAK1/SERK3 and SERK4 coreceptors, and subsequent BAK1 activation by phosphorylation. In terms of tissue distribution, mostly expressed in seedlings shoots and leaves, and, to a lower extent, in roots, stems, siliques, seeds and flowers.

It is found in the cell membrane. The protein localises to the secreted. The protein resides in the extracellular space. It localises to the apoplast. Functionally, brassicaceae-specific phytocytokine (plant endogenous peptide released into the apoplast) perceived by MIK2 in a BAK1/SERK3 and SERK4 coreceptors-dependent manner, that modulates various physiological and antimicrobial processes including growth prevention and reactive oxygen species (ROS) response regulation. Inhibits root growth and regulates root meristems. Prevents general growth and development. Exhibits antibacterial effects against Pseudomonas syringae pv. tomato DC3000, Ralstonia solanacearum, Bacillus subtilis and Agrobacterium tumefaciens, thus being an antimicrobial peptide (AMP). The chain is Serine rich endogenous peptide 14 from Arabidopsis thaliana (Mouse-ear cress).